A 232-amino-acid polypeptide reads, in one-letter code: Homeobox protein SAX-1 (232 aa).

Disordered stretches follow at residues 1–64, 122–150, and 185–208; these read CLPD…SCAK, KQHP…RPAA, and LLGA…LCPS. Residues 65-124 constitute a DNA-binding region (homeobox); it reads PRRARTAFTYEQLVALENKFRATRYLSVCERLNLALSLSLTETQVKIWFQNRRTKWKKQH. Residues 126-142 show a composition bias toward low complexity; the sequence is GADGAAAPAPPAAARCS.

Belongs to the NK-1 homeobox family. As to expression, transiently expressed in the birth zone of the whole spinal cord regardless of the axial level.

It localises to the nucleus. The chain is Homeobox protein SAX-1 (SAX1) from Gallus gallus (Chicken).